Here is a 2531-residue protein sequence, read N- to C-terminus: Talin (2531 aa).

The FERM domain occupies 87–401 (RPLRVRMMDE…GYIDIILKKK (315 aa)). The interval 598 to 621 (GEKLLEAARGLAGAVRHLLKSAEP) is interaction with VIN1. The region spanning 2287–2526 (TDWVDPSDPN…KIRHDKYKRH (240 aa)) is the I/LWEQ domain. The tract at residues 2466-2485 (AAKRSSEEGDDEEVSGGGQE) is disordered.

In terms of assembly, interacts with VIN1 (vinculin); the interaction facilitates VIN1 binding to F-actin.

The protein resides in the cytoplasm. It is found in the cytoskeleton. It localises to the cell cortex. Functionally, probably involved in connections of major cytoskeletal structures to the plasma membrane. This chain is Talin, found in Oscarella pearsei (Sponge).